A 197-amino-acid polypeptide reads, in one-letter code: Holliday junction branch migration complex subunit RuvA (197 aa).

Positions 1–63 are domain I; the sequence is MFEYLNGKLV…EDAHSLYGFV (63 aa). A domain II region spans residues 64–142; the sequence is NESEKALFLR…ATGAVGISLL (79 aa). Positions 142–146 are flexible linker; that stretch reads LDAAP. The tract at residues 147–197 is domain III; it reads ASNLALEEAIEALQALGYKATELKKIEKKLAQEAGLTSEEYIKSALKLMMK.

This sequence belongs to the RuvA family. In terms of assembly, homotetramer. Forms an RuvA(8)-RuvB(12)-Holliday junction (HJ) complex. HJ DNA is sandwiched between 2 RuvA tetramers; dsDNA enters through RuvA and exits via RuvB. An RuvB hexamer assembles on each DNA strand where it exits the tetramer. Each RuvB hexamer is contacted by two RuvA subunits (via domain III) on 2 adjacent RuvB subunits; this complex drives branch migration. In the full resolvosome a probable DNA-RuvA(4)-RuvB(12)-RuvC(2) complex forms which resolves the HJ.

It localises to the cytoplasm. Functionally, the RuvA-RuvB-RuvC complex processes Holliday junction (HJ) DNA during genetic recombination and DNA repair, while the RuvA-RuvB complex plays an important role in the rescue of blocked DNA replication forks via replication fork reversal (RFR). RuvA specifically binds to HJ cruciform DNA, conferring on it an open structure. The RuvB hexamer acts as an ATP-dependent pump, pulling dsDNA into and through the RuvAB complex. HJ branch migration allows RuvC to scan DNA until it finds its consensus sequence, where it cleaves and resolves the cruciform DNA. This chain is Holliday junction branch migration complex subunit RuvA, found in Lactococcus lactis subsp. cremoris (strain MG1363).